Consider the following 92-residue polypeptide: Large ribosomal subunit protein eL43 (92 aa).

Residues cysteine 39, cysteine 42, cysteine 57, and cysteine 60 each coordinate Zn(2+).

It belongs to the eukaryotic ribosomal protein eL43 family. In terms of assembly, component of the large ribosomal subunit. Mature ribosomes consist of a small (40S) and a large (60S) subunit. The 40S subunit contains 32 different proteins and 1 molecule of RNA (18S). The 60S subunit contains 45 different proteins and 3 molecules of RNA (25S, 5.8S and 5S). Zn(2+) is required as a cofactor.

It is found in the cytoplasm. Its function is as follows. Component of the ribosome, a large ribonucleoprotein complex responsible for the synthesis of proteins in the cell. The small ribosomal subunit (SSU) binds messenger RNAs (mRNAs) and translates the encoded message by selecting cognate aminoacyl-transfer RNA (tRNA) molecules. The large subunit (LSU) contains the ribosomal catalytic site termed the peptidyl transferase center (PTC), which catalyzes the formation of peptide bonds, thereby polymerizing the amino acids delivered by tRNAs into a polypeptide chain. The nascent polypeptides leave the ribosome through a tunnel in the LSU and interact with protein factors that function in enzymatic processing, targeting, and the membrane insertion of nascent chains at the exit of the ribosomal tunnel. This Candida albicans (strain SC5314 / ATCC MYA-2876) (Yeast) protein is Large ribosomal subunit protein eL43.